An 882-amino-acid chain; its full sequence is MEPAPARSPRPQQDPARPQEPTMPPPETPSEGRQPSPSPSPTERAPASEEEFQFLRCQQCQAEAKCPKLLPCLHTLCSGCLEASGMQCPICQAPWPLGADTPALDNVFFESLQRRLSVYRQIVDAQAVCTRCKESADFWCFECEQLLCAKCFEAHQWFLKHEARPLAELRNQSVREFLDGTRKTNNIFCSNPNHRTPTLTSIYCRGCSKPLCCSCALLDSSHSELKCDISAEIQQRQEELDAMTQALQEQDSAFGAVHAQMHAAVGQLGRARAETEELIRERVRQVVAHVRAQERELLEAVDARYQRDYEEMASRLGRLDAVLQRIRTGSALVQRMKCYASDQEVLDMHGFLRQALCRLRQEEPQSLQAAVRTDGFDEFKVRLQDLSSCITQGKDAAVSKKASPEAASTPRDPIDVDLPEEAERVKAQVQALGLAEAQPMAVVQSVPGAHPVPVYAFSIKGPSYGEDVSNTTTAQKRKCSQTQCPRKVIKMESEEGKEARLARSSPEQPRPSTSKAVSPPHLDGPPSPRSPVIGSEVFLPNSNHVASGAGEAEERVVVISSSEDSDAENSSSRELDDSSSESSDLQLEGPSTLRVLDENLADPQAEDRPLVFFDLKIDNETQKISQLAAVNRESKFRVVIQPEAFFSIYSKAVSLEVGLQHFLSFLSSMRRPILACYKLWGPGLPNFFRALEDINRLWEFQEAISGFLAALPLIRERVPGASSFKLKNLAQTYLARNMSERSAMAAVLAMRDLCRLLEVSPGPQLAQHVYPFSSLQCFASLQPLVQAAVLPRAEARLLALHNVSFMELLSAHRRDRQGGLKKYSRYLSLQTTTLPPAQPAFNLQALGTYFEGLLEGPALARAEGVSTPLAGRGLAERASQQS.

Residues 1 to 48 (MEPAPARSPRPQQDPARPQEPTMPPPETPSEGRQPSPSPSPTERAPAS) are disordered. Residue S8 is modified to Phosphoserine; by HIPK2. 2 positions are modified to phosphoserine; by HIPK2 and MAPK1: S36 and S38. Residue S48 is modified to Phosphoserine. 2 residues coordinate Zn(2+): C57 and C60. The segment at 57-92 (CQQCQAEAKCPKLLPCLHTLCSGCLEASGMQCPICQ) adopts an RING-type zinc-finger fold. K65 is covalently cross-linked (Glycyl lysine isopeptide (Lys-Gly) (interchain with G-Cter in SUMO1); alternate). A Glycyl lysine isopeptide (Lys-Gly) (interchain with G-Cter in SUMO2); alternate cross-link involves residue K65. Zn(2+)-binding residues include C72, H74, C77, C80, C88, and C91. At S117 the chain carries Phosphoserine; by CHEK2. Residues 124–166 (DAQAVCTRCKESADFWCFECEQLLCAKCFEAHQWFLKHEARPL) form a B box-type 1; atypical zinc finger. Zn(2+) contacts are provided by C129, C132, C151, and H155. K160 participates in a covalent cross-link: Glycyl lysine isopeptide (Lys-Gly) (interchain with G-Cter in SUMO1); alternate. K160 participates in a covalent cross-link: Glycyl lysine isopeptide (Lys-Gly) (interchain with G-Cter in SUMO2); alternate. A Glycyl lysine isopeptide (Lys-Gly) (interchain with G-Cter in SUMO1P1/SUMO5); alternate cross-link involves residue K160. The segment at 183–236 (KTNNIFCSNPNHRTPTLTSIYCRGCSKPLCCSCALLDSSHSELKCDISAEIQQR) adopts a B box-type 2 zinc-finger fold. C189, H194, C215, and H222 together coordinate Zn(2+). Positions 228 to 253 (DISAEIQQRQEELDAMTQALQEQDSA) form a coiled coil. K380 participates in a covalent cross-link: Glycyl lysine isopeptide (Lys-Gly) (interchain with G-Cter in SUMO2); alternate. Residue K380 forms a Glycyl lysine isopeptide (Lys-Gly) (interchain with G-Cter in /SUMO5); alternate linkage. K380 is covalently cross-linked (Glycyl lysine isopeptide (Lys-Gly) (interchain with G-Cter in ubiquitin); alternate). K394 is covalently cross-linked (Glycyl lysine isopeptide (Lys-Gly) (interchain with G-Cter in SUMO2)). A Glycyl lysine isopeptide (Lys-Gly) (interchain with G-Cter in SUMO1P1/SUMO5); alternate cross-link involves residue K400. Residues K400 and K401 each participate in a glycyl lysine isopeptide (Lys-Gly) (interchain with G-Cter in ubiquitin); alternate cross-link. A Glycyl lysine isopeptide (Lys-Gly) (interchain with G-Cter in SUMO2); alternate cross-link involves residue K401. S403 carries the post-translational modification Phosphoserine; by MAPK1 and MAPK7. The segment at 448-555 (GAHPVPVYAF…ASGAGEAEER (108 aa)) is interaction with PER2. K460 participates in a covalent cross-link: Glycyl lysine isopeptide (Lys-Gly) (interchain with G-Cter in SUMO2). A disordered region spans residues 467–589 (DVSNTTTAQK…SESSDLQLEG (123 aa)). Residues 468–484 (VSNTTTAQKRKCSQTQC) are compositionally biased toward polar residues. Residue K476 forms a Glycyl lysine isopeptide (Lys-Gly) (interchain with G-Cter in SUMO2); alternate linkage. K476 participates in a covalent cross-link: Glycyl lysine isopeptide (Lys-Gly) (interchain with G-Cter in ubiquitin); alternate. Positions 476–490 (KRKCSQTQCPRKVIK) match the Nuclear localization signal motif. K478 is covalently cross-linked (Glycyl lysine isopeptide (Lys-Gly) (interchain with G-Cter in SUMO2)). Glycyl lysine isopeptide (Lys-Gly) (interchain with G-Cter in SUMO2); alternate cross-links involve residues K487 and K490. K487 carries the N6-acetyllysine; alternate modification. Residues 489–501 (IKMESEEGKEARL) are compositionally biased toward basic and acidic residues. K490 is covalently cross-linked (Glycyl lysine isopeptide (Lys-Gly) (interchain with G-Cter in SUMO1); alternate). Residue K490 forms a Glycyl lysine isopeptide (Lys-Gly) (interchain with G-Cter in SUMO1P1/SUMO5); alternate linkage. Residue S493 is modified to Phosphoserine. A Glycyl lysine isopeptide (Lys-Gly) (interchain with G-Cter in SUMO1); alternate cross-link involves residue K497. K497 participates in a covalent cross-link: Glycyl lysine isopeptide (Lys-Gly) (interchain with G-Cter in SUMO2); alternate. A Glycyl lysine isopeptide (Lys-Gly) (interchain with G-Cter in SUMO1P1/SUMO5); alternate cross-link involves residue K497. S504 is subject to Phosphoserine. S505 carries the post-translational modification Phosphoserine; by MAPK1. Over residues 505–516 (SPEQPRPSTSKA) the composition is skewed to polar residues. S512 bears the Phosphoserine mark. Position 515 is an N6-acetyllysine (K515). Residues S518, S527, and S530 each carry the phosphoserine modification. S518 is modified (phosphoserine; by CDK1 and CDK2). Phosphoserine; by MAPK1 is present on residues S527 and S530. The sumo interaction motif (SIM) stretch occupies residues 556-562 (VVVISSS). Residue S565 is modified to Phosphoserine. S565 carries the post-translational modification Phosphoserine; by CK2. The residue at position 867 (T867) is a Phosphothreonine.

As to quaternary structure, key component of PML bodies. PML bodies are formed by the interaction of PML homodimers (via SUMO-binding motif) with sumoylated PML, leading to the assembly of higher oligomers. Several types of PML bodies have been observed. PML bodies can form hollow spheres that can sequester target proteins inside. Interacts (via SUMO-binding motif) with sumoylated proteins. Interacts (via C-terminus) with p53/TP53. Recruits p53/TP53 and CHEK2 into PML bodies, which promotes p53/TP53 phosphorylation at 'Ser-20' and prevents its proteasomal degradation. Interacts with MDM2, and sequesters MDM2 in the nucleolus, thereby preventing ubiquitination of p53/TP53. Interaction with PML-RARA oncoprotein and certain viral proteins causes disassembly of PML bodies and abolishes the normal PML function. Interacts with HIPK2, TERT, SIRT1, TOPBP1, TRIM27 and TRIM69. Interacts with ELF4 (via C-terminus). Interacts with ITPR3. Interacts (in the cytoplasm) with TGFBR1, TGFBR2 and PKM. Interacts (via the coiled-coil domain and when sumoylated) with SATB1. Interacts with UBE2I; the interaction is enhanced by arsenic binding. Interacts (PML-RARA oncoprotein, via the coiled-coil domain) with UBE2I; the interaction is enhanced by arsenic binding and is required for PML-RARA oncoprotein sumoylation and inhibition of RARA transactivational activity. Interacts with RB1, PPP1A, SMAD2, SMAD3, DAXX, RPL11 and MTOR. Interacts with PPARGC1A and KAT2A. Interacts with CSNK2A1 and CSNK2A3. Interacts with ANKRD2; the interaction is direct. Interacts (via SUMO-interacting motif) with sumoylated MORC3. Isoform PML-1, isoform PML-2, isoform PML-3, isoform PML-4, isoform PML-5 and isoform PML-6 interact with RNF4. Isoform PML-1 interacts with NLRP3. Isoform PML-1, isoform PML-2, isoform PML-3, isoform PML-4 and isoform PML-5 interact with MAGEA2, RBL2, PER2 and E2F4. Isoform PML-2 interacts with CIITA. Isoform PML-2, isoform PML-3 and isoform PML-4 interact with TBX2. Isoform PML-4 interacts with RANBP2, HDAC7, KAT6A, WRN, PIN1, TBX3 and phosphorylated MAPK1/ERK2. Isoform PML-4 interacts with the CTNNB1 and TCF7L2/TCF4 complex. Isoform PML-4 preferentially interacts with MAPK7/BMK1 although other isoforms (isoform PML-1, isoform PML-2, isoform PML-3 and isoform PML-6) also interact with it. Isoform PML-12 interacts with PIAS1, PIAS2 (isoform PIAS2-alpha) and CSNK2A1/CK2. Interacts with TRIM16. Interacts with PRDM1/Blimp-1. Interacts (via RING-type zinc finger) with EIF4E; the interaction results in conformational changes of both interacting proteins and reduces EIF4E affinity for the 5' m7G cap of mRNA, thus reducing EIF4E-mediated mRNA nuclear export. In terms of assembly, (Microbial infection) Interacts with Lassa virus Z protein and rabies virus phosphoprotein. (Microbial infection) Isoform PML-1 interacts with herpes simplex virus-1/HHV-1 ICP0. As to quaternary structure, (Microbial infection) Isoform PML-2 interacts with human adenovirus 2 E1A and this interaction stimulates E1A-dependent transcriptional activation. In terms of assembly, (Microbial infection) Isoform PML-4 interacts with VZV capsid protein VP26/ORF23 capsid protein. (Microbial infection) The sumoylated isoform PML-4 interacts with encephalomyocarditis virus (EMCV) RNA-directed RNA polymerase 3D-POL (P3D-POL). As to quaternary structure, (Microbial infection) Isoform PML-6 interacts with moloney murine leukemia virus (MoMLV) integrase (IN) and reverse transcriptase (RT). In terms of assembly, (Microbial infection) Isoform PML-4 and isoform PML-5 interact with human adenovirus 5 E1B-55K protein; these interactions promote efficient subnuclear targeting of E1B-55K to PML nuclear bodies. (Microbial infection) Isoform PML-3 interacts (via RING-type zinc finger) with human foamy virus bel1/tas and bet. As to quaternary structure, (Microbial infection) Interacts with human cytomegalovirus (HHV-5) immediate early protein IE1; this interaction mediates PML desumoylation and PML-mediated sumoylation of IE1. Ubiquitinated; mediated by RNF4, RNF111, UHRF1, UBE3A/E6AP, BCR(KLHL20) E3 ubiquitin ligase complex E3 ligase complex, SIAH1 or SIAH2 and leading to subsequent proteasomal degradation. Ubiquitination by BCR(KLHL20) E3 ubiquitin ligase complex E3 ligase complex requires CDK1/2-mediated phosphorylation at Ser-518 which in turn is recognized by prolyl-isopeptidase PIN1 and PIN1-catalyzed isomerization further potentiates PML interaction with KLHL20. 'Lys-6'-, 'Lys-11'-, 'Lys-48'- and 'Lys-63'-linked polyubiquitination by RNF4 is polysumoylation-dependent. Ubiquitination by RNF111 is polysumoylation-dependent. Post-translationally, sumoylation regulates PML's: stability in response to extracellular or intracellular stimuli, transcription directly and indirectly, through sequestration of or dissociation of the transcription factors from PML-NBs, ability to regulate apoptosis and its anti-viral activities. It is also essential for: maintaining proper PML nuclear bodies (PML-NBs) structure and normal function, recruitment of components of PML-NBs, the turnover and retention of PML in PML-NBs and the integrity of PML-NBs. Undergoes 'Lys-11'-linked sumoylation. Sumoylation on all three sites (Lys-65, Lys-160 and Lys-490) is required for nuclear body formation. Sumoylation on Lys-160 is a prerequisite for sumoylation on Lys-65. Lys-65 and Lys-160 are sumoylated by PISA1 and PIAS2. PIAS1-mediated sumoylation of PML promotes its interaction with CSNK2A1/CK2 and phosphorylation at Ser-565 which in turn triggers its ubiquitin-mediated degradation. PIAS1-mediated sumoylation of PML-RARA promotes its ubiquitin-mediated degradation. The PML-RARA fusion protein requires the coiled-coil domain for sumoylation. Sumoylation at Lys-490 by RANBP2 is essential for the proper assembly of PML-NBs. SUMO1P1/SUMO5 conjugated PML at Lys-160, Lys-380, Lys-400, Lys-490 and Lys-497, but Lys-380, Lys-400 and Lys-497 are not key acceptor lysines. SUMO1P1/SUMO5 forms polymeric chain on Lys-160 of PML by successive conjugation at 'Lys-18'; facilitating recruitment of PML-NB components, which enlarges PML. SUMO1P1/SUMO5 conjugation of PML increases SUMO2/3 conjugation, which leads to the recruitment of RNF4 and ubiquitin-dependent disintegration of PML-NBs. SUMO1P1/SUMO5 monoconjugated Lys-490. DNA damage triggers its sumoylation while some but not all viral infections can abolish sumoylation. Desumoylated by SENP1, SENP2, SENP3, SENP5 and SENP6. Arsenic induces PML and PML-RARA polysumoylation and their subsequent RNF4-dependent ubiquitination and proteasomal degradation, and is used as treatment in acute promyelocytic leukemia (APL). The nuclear isoforms (isoform PML-1, isoform PML-2, isoform PML-3, isoform PML-4, isoform PML-5 and isoform PML-6) show an increased sumoylation in response to arsenic trioxide. The cytoplasmic isoform PML-7 is not sumoylated. In terms of processing, phosphorylation is a major regulatory mechanism that controls PML protein abundance and the number and size of PML nuclear bodies (PML-NBs). Phosphorylated in response to DNA damage, probably by ATR. HIPK2-mediated phosphorylation at Ser-8, Ser-36 and Ser-38 leads to increased accumulation of PML protein and its sumoylation and is required for the maximal pro-apoptotic activity of PML after DNA damage. CHEK2-mediated phosphorylation at Ser-117 is important for PML-mediated apoptosis following DNA damage. MAPK1-mediated phosphorylations at Ser-403, Ser-505, Ser-527 and Ser-530 and CDK1/2-mediated phosphorylation at Ser-518 promote PIN1-dependent PML degradation. CK2-mediated phosphorylation at Ser-565 primes PML ubiquitination via an unidentified ubiquitin ligase. (Microbial infection) Upon infection with Epstein-Barr virus, phosphorylated by CK2. Viral EBNA1 increases the association of CK2 with PML proteins, which increases PML phosphorylation by CK2, triggering the USP7-dependent polyubiquitylation and degradation of PML. Post-translationally, acetylation at Lys-487 is essential for its nuclear localization. Deacetylated at Lys-487 by SIRT1 and this deacetylation promotes PML control of PER2 nuclear localization. In terms of processing, (Microbial infection) Immediate early protein IE1 of human cytomegalovirus (HHV-5) interferes with the sumoylation of PML. Immediate early protein IE1 inhibits PML de novo sumoylation. (Microbial infection) Cleaved at two different sites by enterovirus 71 protease 3C, leading to impaired PML-Nuclear bodies formation.

The protein resides in the nucleus. It localises to the nucleoplasm. Its subcellular location is the cytoplasm. The protein localises to the PML body. It is found in the nucleolus. The protein resides in the endoplasmic reticulum membrane. It localises to the early endosome membrane. It functions in the pathway protein modification; protein sumoylation. Functionally, functions via its association with PML-nuclear bodies (PML-NBs) in a wide range of important cellular processes, including tumor suppression, transcriptional regulation, apoptosis, senescence, DNA damage response, and viral defense mechanisms. Acts as the scaffold of PML-NBs allowing other proteins to shuttle in and out, a process which is regulated by SUMO-mediated modifications and interactions. Inhibits EIF4E-mediated mRNA nuclear export by reducing EIF4E affinity for the 5' 7-methylguanosine (m7G) cap of target mRNAs. Isoform PML-4 has a multifaceted role in the regulation of apoptosis and growth suppression: activates RB1 and inhibits AKT1 via interactions with PP1 and PP2A phosphatases respectively, negatively affects the PI3K pathway by inhibiting MTOR and activating PTEN, and positively regulates p53/TP53 by acting at different levels (by promoting its acetylation and phosphorylation and by inhibiting its MDM2-dependent degradation). Isoform PML-4 also: acts as a transcriptional repressor of TBX2 during cellular senescence and the repression is dependent on a functional RBL2/E2F4 repressor complex, regulates double-strand break repair in gamma-irradiation-induced DNA damage responses via its interaction with WRN, acts as a negative regulator of telomerase by interacting with TERT, and regulates PER2 nuclear localization and circadian function. Isoform PML-6 inhibits specifically the activity of the tetrameric form of PKM. The nuclear isoforms (isoform PML-1, isoform PML-2, isoform PML-3, isoform PML-4 and isoform PML-5) in concert with SATB1 are involved in local chromatin-loop remodeling and gene expression regulation at the MHC-I locus. Isoform PML-2 is required for efficient IFN-gamma induced MHC II gene transcription via regulation of CIITA. Cytoplasmic PML is involved in the regulation of the TGF-beta signaling pathway. PML also regulates transcription activity of ELF4 and can act as an important mediator for TNF-alpha- and IFN-alpha-mediated inhibition of endothelial cell network formation and migration. Its function is as follows. Exhibits antiviral activity against both DNA and RNA viruses. The antiviral activity can involve one or several isoform(s) and can be enhanced by the permanent PML-NB-associated protein DAXX or by the recruitment of p53/TP53 within these structures. Isoform PML-4 restricts varicella zoster virus (VZV) via sequestration of virion capsids in PML-NBs thereby preventing their nuclear egress and inhibiting formation of infectious virus particles. The sumoylated isoform PML-4 restricts rabies virus by inhibiting viral mRNA and protein synthesis. The cytoplasmic isoform PML-14 can restrict herpes simplex virus-1 (HHV-1) replication by sequestering the viral E3 ubiquitin-protein ligase ICP0 in the cytoplasm. Isoform PML-6 shows restriction activity towards human cytomegalovirus (HHV-5) and influenza A virus strains PR8(H1N1) and ST364(H3N2). Sumoylated isoform PML-4 and isoform PML-12 show antiviral activity against encephalomyocarditis virus (EMCV) by promoting nuclear sequestration of viral polymerase (P3D-POL) within PML NBs. Isoform PML-3 exhibits antiviral activity against poliovirus by inducing apoptosis in infected cells through the recruitment and the activation of p53/TP53 in the PML-NBs. Isoform PML-3 represses human foamy virus (HFV) transcription by complexing the HFV transactivator, bel1/tas, preventing its binding to viral DNA. PML may positively regulate infectious hepatitis C viral (HCV) production and isoform PML-2 may enhance adenovirus transcription. Functions as an E3 SUMO-protein ligase that sumoylates (HHV-5) immediate early protein IE1, thereby participating in the antiviral response. Isoforms PML-3 and PML-6 display the highest levels of sumoylation activity. The chain is Protein PML (PML) from Homo sapiens (Human).